A 110-amino-acid polypeptide reads, in one-letter code: Phosphoribosyl-ATP pyrophosphatase (110 aa).

It belongs to the PRA-PH family.

It is found in the cytoplasm. The catalysed reaction is 1-(5-phospho-beta-D-ribosyl)-ATP + H2O = 1-(5-phospho-beta-D-ribosyl)-5'-AMP + diphosphate + H(+). Its pathway is amino-acid biosynthesis; L-histidine biosynthesis; L-histidine from 5-phospho-alpha-D-ribose 1-diphosphate: step 2/9. The chain is Phosphoribosyl-ATP pyrophosphatase from Clostridium botulinum (strain Kyoto / Type A2).